The following is a 100-amino-acid chain: Urease subunit gamma (100 aa).

It belongs to the urease gamma subunit family. As to quaternary structure, heterotrimer of UreA (gamma), UreB (beta) and UreC (alpha) subunits. Three heterotrimers associate to form the active enzyme.

Its subcellular location is the cytoplasm. The catalysed reaction is urea + 2 H2O + H(+) = hydrogencarbonate + 2 NH4(+). It functions in the pathway nitrogen metabolism; urea degradation; CO(2) and NH(3) from urea (urease route): step 1/1. The protein is Urease subunit gamma of Acetivibrio thermocellus (strain ATCC 27405 / DSM 1237 / JCM 9322 / NBRC 103400 / NCIMB 10682 / NRRL B-4536 / VPI 7372) (Clostridium thermocellum).